A 395-amino-acid polypeptide reads, in one-letter code: Guanine nucleotide-binding protein subunit beta-5b (395 aa).

WD repeat units follow at residues 103–142 (GHGNKVLCMDWCRDKRRIVSSSQDGKVIVWDAYTTNKEHA), 145–184 (MPCTWVMACAYAPSGCAVACGGLDNKCSVYPLSLDKNENL), 193–234 (MHTN…QSFH), 235–276 (GHSA…NVQS), 279–318 (THDSDINSVKYYPSGDAFASGSDDATCRLYDLRADREVAI), 320–362 (SKDS…RVAI), and 365–395 (GHENRVSTVRVSPDGTAFCSGSWDNTLRIWA).

Belongs to the WD repeat G protein beta family. In terms of assembly, may interact with RGS9; this interaction stabilizes both proteins and increases RGS9 GTPase-activating protein (GAP) activity, hence accelerating the deactivation of D(2) dopamine receptor-mediated signaling.

It is found in the membrane. In terms of biological role, enhances GTPase-activating protein (GAP) activity of regulator of G protein signaling (RGS) proteins, such as RGS7 and RGS9, hence involved in the termination of the signaling initiated by the G protein coupled receptors (GPCRs) by accelerating the GTP hydrolysis on the G-alpha subunits, thereby promoting their inactivation. Increases RGS7 GTPase-activating protein (GAP) activity, thereby regulating mood and cognition. Increases RGS9 GTPase-activating protein (GAP) activity, hence contributes to the deactivation of G protein signaling initiated by D(2) dopamine receptors. Along with gnb5a, plays an important role in neuronal signaling, including in the parasympathetic, but not sympathetic, control of heart rate. This is Guanine nucleotide-binding protein subunit beta-5b from Danio rerio (Zebrafish).